Consider the following 358-residue polypeptide: Probable RNA methyltransferase MXAN_6459 (358 aa).

The Proton acceptor role is filled by E92. The Radical SAM core domain maps to 99–327 (FDEKYVICVS…PVARRYSGGK (229 aa)). Residues C106 and C333 are joined by a disulfide bond. The [4Fe-4S] cluster site is built by C113, C117, and C120. Residues 160 to 161 (GE), S192, 215 to 217 (SVT), and D289 each bind S-adenosyl-L-methionine. The active-site S-methylcysteine intermediate is the C333.

Belongs to the radical SAM superfamily. RlmN family. It depends on [4Fe-4S] cluster as a cofactor.

Its subcellular location is the cytoplasm. The protein is Probable RNA methyltransferase MXAN_6459 of Myxococcus xanthus (strain DK1622).